The following is a 199-amino-acid chain: Superoxide dismutase [Mn/Fe] (199 aa).

4 residues coordinate Fe(3+): H27, H81, D161, and H165. Residues H27, H81, D161, and H165 each coordinate Mn(2+).

Belongs to the iron/manganese superoxide dismutase family. As to quaternary structure, homodimer. The cofactor is Mn(2+). Requires Fe(3+) as cofactor.

It catalyses the reaction 2 superoxide + 2 H(+) = H2O2 + O2. Functionally, destroys superoxide anion radicals which are normally produced within the cells and which are toxic to biological systems. Catalyzes the dismutation of superoxide anion radicals into O2 and H2O2 by successive reduction and oxidation of the transition metal ion at the active site. The chain is Superoxide dismutase [Mn/Fe] (sodA) from Staphylococcus saprophyticus subsp. saprophyticus (strain ATCC 15305 / DSM 20229 / NCIMB 8711 / NCTC 7292 / S-41).